Consider the following 336-residue polypeptide: Glyceraldehyde-3-phosphate dehydrogenase 1 (336 aa).

NAD(+) is bound by residues 12 to 13 (RI), Asp34, and Arg79. D-glyceraldehyde 3-phosphate contacts are provided by residues 149 to 151 (SCT), Thr180, 209 to 210 (TG), and Arg232. The active-site Nucleophile is the Cys150. Position 314 (Asn314) interacts with NAD(+).

This sequence belongs to the glyceraldehyde-3-phosphate dehydrogenase family. Homotetramer.

Its subcellular location is the cytoplasm. It carries out the reaction D-glyceraldehyde 3-phosphate + phosphate + NAD(+) = (2R)-3-phospho-glyceroyl phosphate + NADH + H(+). It participates in carbohydrate degradation; glycolysis; pyruvate from D-glyceraldehyde 3-phosphate: step 1/5. With respect to regulation, inhibited by koningic acid through the interaction of cysteine residues with koningic acid even at very low concentrations. In Trichoderma koningii (Hypocrea koningii), this protein is Glyceraldehyde-3-phosphate dehydrogenase 1 (gpd1).